Here is a 91-residue protein sequence, read N- to C-terminus: ATP synthase subunit c (91 aa).

Transmembrane regions (helical) follow at residues 4 to 24 (FTMC…GTGI) and 53 to 73 (IGLA…LIIL).

The protein belongs to the ATPase C chain family. In terms of assembly, F-type ATPases have 2 components, F(1) - the catalytic core - and F(0) - the membrane proton channel. F(1) has five subunits: alpha(3), beta(3), gamma(1), delta(1), epsilon(1). F(0) has three main subunits: a(1), b(2) and c(10-14). The alpha and beta chains form an alternating ring which encloses part of the gamma chain. F(1) is attached to F(0) by a central stalk formed by the gamma and epsilon chains, while a peripheral stalk is formed by the delta and b chains.

The protein resides in the cell inner membrane. Its function is as follows. F(1)F(0) ATP synthase produces ATP from ADP in the presence of a proton or sodium gradient. F-type ATPases consist of two structural domains, F(1) containing the extramembraneous catalytic core and F(0) containing the membrane proton channel, linked together by a central stalk and a peripheral stalk. During catalysis, ATP synthesis in the catalytic domain of F(1) is coupled via a rotary mechanism of the central stalk subunits to proton translocation. In terms of biological role, key component of the F(0) channel; it plays a direct role in translocation across the membrane. A homomeric c-ring of between 10-14 subunits forms the central stalk rotor element with the F(1) delta and epsilon subunits. This Geobacter sulfurreducens (strain ATCC 51573 / DSM 12127 / PCA) protein is ATP synthase subunit c.